The following is a 625-amino-acid chain: Glutamine--fructose-6-phosphate aminotransferase [isomerizing] (625 aa).

The Nucleophile; for GATase activity role is filled by Cys-2. A Glutamine amidotransferase type-2 domain is found at 2 to 229 (CGIVGFVGRT…NDQIVTITAD (228 aa)). SIS domains follow at residues 296–436 (IDES…LRGN) and 470–615 (LAQD…VDQP). Residue Lys-620 is the For Fru-6P isomerization activity of the active site.

In terms of assembly, homodimer.

It is found in the cytoplasm. It catalyses the reaction D-fructose 6-phosphate + L-glutamine = D-glucosamine 6-phosphate + L-glutamate. In terms of biological role, catalyzes the first step in hexosamine metabolism, converting fructose-6P into glucosamine-6P using glutamine as a nitrogen source. This is Glutamine--fructose-6-phosphate aminotransferase [isomerizing] from Corynebacterium diphtheriae (strain ATCC 700971 / NCTC 13129 / Biotype gravis).